Reading from the N-terminus, the 595-residue chain is Aspartate--tRNA(Asp/Asn) ligase (595 aa).

L-aspartate is bound at residue E175. Positions 199–202 are aspartate; that stretch reads QQYK. The L-aspartate site is built by R221 and H454. Position 221 to 223 (221 to 223) interacts with ATP; it reads RDE. E488 serves as a coordination point for ATP. R495 is an L-aspartate binding site. 540–543 contacts ATP; it reads GIDR.

This sequence belongs to the class-II aminoacyl-tRNA synthetase family. Type 1 subfamily. As to quaternary structure, homodimer.

The protein resides in the cytoplasm. The enzyme catalyses tRNA(Asx) + L-aspartate + ATP = L-aspartyl-tRNA(Asx) + AMP + diphosphate. Its function is as follows. Aspartyl-tRNA synthetase with relaxed tRNA specificity since it is able to aspartylate not only its cognate tRNA(Asp) but also tRNA(Asn). Reaction proceeds in two steps: L-aspartate is first activated by ATP to form Asp-AMP and then transferred to the acceptor end of tRNA(Asp/Asn). The protein is Aspartate--tRNA(Asp/Asn) ligase of Sinorhizobium medicae (strain WSM419) (Ensifer medicae).